The following is a 327-amino-acid chain: Zinc transport protein ZntB (327 aa).

Residues 1–273 are Cytoplasmic-facing; the sequence is MEAIKGSEVN…SRRSYTMSLM (273 aa). Residues 274–294 form a helical membrane-spanning segment; it reads AMVFLPSTFLTGLFGVNLGGI. The Periplasmic segment spans residues 295-300; the sequence is PGGGWH. The helical transmembrane segment at 301–321 threads the bilayer; sequence LGFSVFCVALVLLIGGVTWWL. The Cytoplasmic portion of the chain corresponds to 322 to 327; the sequence is HRSKWL.

Belongs to the CorA metal ion transporter (MIT) (TC 1.A.35) family.

It is found in the cell inner membrane. The catalysed reaction is Zn(2+)(out) + H(+)(out) = Zn(2+)(in) + H(+)(in). Its function is as follows. Zinc transporter. Acts as a Zn(2+):proton symporter, which likely mediates zinc ion uptake. The sequence is that of Zinc transport protein ZntB from Cronobacter sakazakii (strain ATCC BAA-894) (Enterobacter sakazakii).